The sequence spans 267 residues: Indole-3-glycerol phosphate synthase (267 aa).

Belongs to the TrpC family.

The enzyme catalyses 1-(2-carboxyphenylamino)-1-deoxy-D-ribulose 5-phosphate + H(+) = (1S,2R)-1-C-(indol-3-yl)glycerol 3-phosphate + CO2 + H2O. Its pathway is amino-acid biosynthesis; L-tryptophan biosynthesis; L-tryptophan from chorismate: step 4/5. The polypeptide is Indole-3-glycerol phosphate synthase (Dichelobacter nodosus (strain VCS1703A)).